A 152-amino-acid chain; its full sequence is Ribosome maturation factor RimP (152 aa).

It belongs to the RimP family.

It localises to the cytoplasm. Its function is as follows. Required for maturation of 30S ribosomal subunits. The protein is Ribosome maturation factor RimP of Pseudomonas aeruginosa (strain LESB58).